We begin with the raw amino-acid sequence, 315 residues long: Thioredoxin reductase (315 aa).

An FAD-binding site is contributed by 34–41; sequence EGMKVGGQ. Cys134 and Cys137 are disulfide-bonded. An FAD-binding site is contributed by 282–291; sequence DIRVKSLRQV.

It belongs to the class-II pyridine nucleotide-disulfide oxidoreductase family. In terms of assembly, homodimer. It depends on FAD as a cofactor.

The protein localises to the cytoplasm. It catalyses the reaction [thioredoxin]-dithiol + NADP(+) = [thioredoxin]-disulfide + NADPH + H(+). The chain is Thioredoxin reductase (trxB) from Peptoclostridium litorale (Clostridium litorale).